The following is a 436-amino-acid chain: AMSH-like protease (436 aa).

N-acetylmethionine is present on Met1. Ser25 and Ser242 each carry phosphoserine. The region spanning 269–397 (VVLSRDLCHK…IFRLTNAGML (129 aa)) is the MPN domain. His347, His349, Asp360, His362, Cys402, His408, and His410 together coordinate Zn(2+). The JAMM motif motif lies at 347-360 (HTHPTQTAFLSSVD).

The protein belongs to the peptidase M67C family. Zn(2+) is required as a cofactor. As to expression, ubiquitously expressed. Isoform 1 is widely expressed while isoform 2 is testis-specific.

Its function is as follows. Zinc metalloprotease that specifically cleaves 'Lys-63'-linked polyubiquitin chains. Acts as a positive regulator of the TORC1 signaling pathway by mediating 'Lys-63'-linked deubiquitination of SESN2, thereby inhibiting SESN2-interaction with the GATOR2 complex. Does not cleave 'Lys-48'-linked polyubiquitin chains. The sequence is that of AMSH-like protease (Stambpl1) from Mus musculus (Mouse).